Reading from the N-terminus, the 400-residue chain is Methylthioribose kinase (400 aa).

ATP is bound by residues Asn40, Lys57, and 111 to 113 (EDL). Asp229 is a binding site for substrate. Residue 246 to 248 (DAE) participates in ATP binding. A substrate-binding site is contributed by Arg344.

Belongs to the methylthioribose kinase family. Homodimer.

The catalysed reaction is 5-(methylsulfanyl)-D-ribose + ATP = 5-(methylsulfanyl)-alpha-D-ribose 1-phosphate + ADP + H(+). Its pathway is amino-acid biosynthesis; L-methionine biosynthesis via salvage pathway; S-methyl-5-thio-alpha-D-ribose 1-phosphate from S-methyl-5'-thioadenosine (hydrolase route): step 2/2. Functionally, catalyzes the phosphorylation of methylthioribose into methylthioribose-1-phosphate. This Pectobacterium carotovorum subsp. carotovorum (strain PC1) protein is Methylthioribose kinase.